The following is a 485-amino-acid chain: Glutamyl-tRNA(Gln) amidotransferase subunit A (485 aa).

Catalysis depends on charge relay system residues lysine 79 and serine 154. Catalysis depends on serine 178, which acts as the Acyl-ester intermediate.

It belongs to the amidase family. GatA subfamily. Heterotrimer of A, B and C subunits.

The enzyme catalyses L-glutamyl-tRNA(Gln) + L-glutamine + ATP + H2O = L-glutaminyl-tRNA(Gln) + L-glutamate + ADP + phosphate + H(+). Its function is as follows. Allows the formation of correctly charged Gln-tRNA(Gln) through the transamidation of misacylated Glu-tRNA(Gln) in organisms which lack glutaminyl-tRNA synthetase. The reaction takes place in the presence of glutamine and ATP through an activated gamma-phospho-Glu-tRNA(Gln). This is Glutamyl-tRNA(Gln) amidotransferase subunit A from Carboxydothermus hydrogenoformans (strain ATCC BAA-161 / DSM 6008 / Z-2901).